The following is a 409-amino-acid chain: MDKLLERFLHYVSLDTQSKSGVRQVPSTEGQWKLLRLLKQQLEEMGLVNITLSEKGTLMATLPANVEGDIPAIGFISHVDTSPDFSGKNVNPQIVENYRGGDIALGIGDEVLSPVMFPVLHQLLGQTLITTDGKTLLGADDKAGVAEIMTALAVLKGNPIPHGDIKVAFTPDEEVGKGAKHFDVEAFGAQWAYTVDGGGVGELEFENFNAASVNIKIVGNNVHPGTAKGVMVNALSLAARIHAEVPADEAPETTEGYEGFYHLASMKGTVDRAEMHYIIRDFDRKQFEARKRKMMEIAKKVGKGLHPDCYIELVIEDSYYNMREKVVEHPHILDIAQQAMRDCHITPEMKPIRGGTDGAQLSFMGLPCPNLFTGGYNYHGKHEFVTLEGMEKAVQVIVRIAELTAKRGQ.

Histidine 78 is a Zn(2+) binding site. Residue aspartate 80 is part of the active site. A Zn(2+)-binding site is contributed by aspartate 140. The active-site Proton acceptor is glutamate 173. Positions 174, 196, and 379 each coordinate Zn(2+).

The protein belongs to the peptidase M20B family. The cofactor is Zn(2+).

The protein localises to the cytoplasm. The enzyme catalyses Release of the N-terminal residue from a tripeptide.. Its function is as follows. Cleaves the N-terminal amino acid of tripeptides. This Salmonella heidelberg (strain SL476) protein is Peptidase T.